We begin with the raw amino-acid sequence, 523 residues long: MTNIHNHKILILDFGSQYTQLIARRVREIGVYCELWAWDVTEEQIREFAPTGIILSGSPESTTEENSPRAPEYVFNAGVPVLGVCYGMQTMAMQLGGLTETSDHREFGYASVSLENSTALFANLNDNLTASEPKLDVWMSHGDKVTRLPQNFQVTGTTPTCPIAAMSDESRRFYGVQFHPEVTHTKKGLELLTNFVVNICGCETKWTAENIIEDAVARIKEQVGDDEVILGLSGGVDSSVVALLLHRAIGKNLHCVFVDNGLLRLHEGDQVMEMFGDKFGLNITRVDAESRFLGELAGVSDPEAKRKIIGKVFVDVFDDESKKLTNVKWLAQGTIYPDVIESAASKTGKAHVIKSHHNVGGLPDYMKLGLVEPLRELFKDEVRKIGLALGLPAEMINRHPFPGPGLGVRVLGEVKKEYCDLLRRADAIFIEELRNSGWYEKTSQAFSVFLPVKSVGVMGDGRKYDWVISLRAVETIDFMTAHWAHLPYDLLGKVSNRIINEVNGISRVVYDISGKPPATIEWE.

Positions 8 to 205 (KILILDFGSQ…VVNICGCETK (198 aa)) constitute a Glutamine amidotransferase type-1 domain. C85 (nucleophile) is an active-site residue. Residues H179 and E181 contribute to the active site. Residues 206 to 398 (WTAENIIEDA…LGLPAEMINR (193 aa)) enclose the GMPS ATP-PPase domain. 233–239 (SGGVDSS) serves as a coordination point for ATP.

Homodimer.

It carries out the reaction XMP + L-glutamine + ATP + H2O = GMP + L-glutamate + AMP + diphosphate + 2 H(+). Its pathway is purine metabolism; GMP biosynthesis; GMP from XMP (L-Gln route): step 1/1. Catalyzes the synthesis of GMP from XMP. This Haemophilus influenzae (strain PittEE) protein is GMP synthase [glutamine-hydrolyzing].